A 306-amino-acid polypeptide reads, in one-letter code: Aspartate carbamoyltransferase catalytic subunit (306 aa).

The carbamoyl phosphate site is built by R55 and T56. K84 contacts L-aspartate. 3 residues coordinate carbamoyl phosphate: R105, H133, and Q136. L-aspartate-binding residues include R166 and R227. 2 residues coordinate carbamoyl phosphate: L265 and P266.

It belongs to the aspartate/ornithine carbamoyltransferase superfamily. ATCase family. Heterododecamer (2C3:3R2) of six catalytic PyrB chains organized as two trimers (C3), and six regulatory PyrI chains organized as three dimers (R2).

The catalysed reaction is carbamoyl phosphate + L-aspartate = N-carbamoyl-L-aspartate + phosphate + H(+). It participates in pyrimidine metabolism; UMP biosynthesis via de novo pathway; (S)-dihydroorotate from bicarbonate: step 2/3. Catalyzes the condensation of carbamoyl phosphate and aspartate to form carbamoyl aspartate and inorganic phosphate, the committed step in the de novo pyrimidine nucleotide biosynthesis pathway. The polypeptide is Aspartate carbamoyltransferase catalytic subunit (Neisseria meningitidis serogroup C / serotype 2a (strain ATCC 700532 / DSM 15464 / FAM18)).